The sequence spans 209 residues: ATP phosphoribosyltransferase (209 aa).

Belongs to the ATP phosphoribosyltransferase family. Short subfamily. In terms of assembly, heteromultimer composed of HisG and HisZ subunits.

The protein localises to the cytoplasm. It catalyses the reaction 1-(5-phospho-beta-D-ribosyl)-ATP + diphosphate = 5-phospho-alpha-D-ribose 1-diphosphate + ATP. It functions in the pathway amino-acid biosynthesis; L-histidine biosynthesis; L-histidine from 5-phospho-alpha-D-ribose 1-diphosphate: step 1/9. Functionally, catalyzes the condensation of ATP and 5-phosphoribose 1-diphosphate to form N'-(5'-phosphoribosyl)-ATP (PR-ATP). Has a crucial role in the pathway because the rate of histidine biosynthesis seems to be controlled primarily by regulation of HisG enzymatic activity. The chain is ATP phosphoribosyltransferase from Caldicellulosiruptor bescii (strain ATCC BAA-1888 / DSM 6725 / KCTC 15123 / Z-1320) (Anaerocellum thermophilum).